The sequence spans 257 residues: Imidazole glycerol phosphate synthase subunit HisF (257 aa).

Residues D11 and D130 contribute to the active site.

The protein belongs to the HisA/HisF family. Heterodimer of HisH and HisF.

The protein resides in the cytoplasm. The catalysed reaction is 5-[(5-phospho-1-deoxy-D-ribulos-1-ylimino)methylamino]-1-(5-phospho-beta-D-ribosyl)imidazole-4-carboxamide + L-glutamine = D-erythro-1-(imidazol-4-yl)glycerol 3-phosphate + 5-amino-1-(5-phospho-beta-D-ribosyl)imidazole-4-carboxamide + L-glutamate + H(+). It functions in the pathway amino-acid biosynthesis; L-histidine biosynthesis; L-histidine from 5-phospho-alpha-D-ribose 1-diphosphate: step 5/9. IGPS catalyzes the conversion of PRFAR and glutamine to IGP, AICAR and glutamate. The HisF subunit catalyzes the cyclization activity that produces IGP and AICAR from PRFAR using the ammonia provided by the HisH subunit. In Aliivibrio salmonicida (strain LFI1238) (Vibrio salmonicida (strain LFI1238)), this protein is Imidazole glycerol phosphate synthase subunit HisF.